Consider the following 185-residue polypeptide: Ribosome-recycling factor (185 aa).

This sequence belongs to the RRF family.

Its subcellular location is the cytoplasm. Its function is as follows. Responsible for the release of ribosomes from messenger RNA at the termination of protein biosynthesis. May increase the efficiency of translation by recycling ribosomes from one round of translation to another. This Pseudomonas paraeruginosa (strain DSM 24068 / PA7) (Pseudomonas aeruginosa (strain PA7)) protein is Ribosome-recycling factor.